We begin with the raw amino-acid sequence, 477 residues long: Argininosuccinate lyase (477 aa).

Polar residues predominate over residues 1-18 (MTTSSHSSEQPTSTQTSG). Positions 1 to 21 (MTTSSHSSEQPTSTQTSGMWG) are disordered.

The protein belongs to the lyase 1 family. Argininosuccinate lyase subfamily.

The protein localises to the cytoplasm. The enzyme catalyses 2-(N(omega)-L-arginino)succinate = fumarate + L-arginine. It participates in amino-acid biosynthesis; L-arginine biosynthesis; L-arginine from L-ornithine and carbamoyl phosphate: step 3/3. This chain is Argininosuccinate lyase, found in Acinetobacter baylyi (strain ATCC 33305 / BD413 / ADP1).